Here is a 355-residue protein sequence, read N- to C-terminus: tRNA-specific 2-thiouridylase MnmA (355 aa).

ATP-binding positions include 6–13 and Met32; that span reads AMSGGVDS. The active-site Nucleophile is the Cys93. Cys93 and Cys191 are disulfide-bonded. An ATP-binding site is contributed by Gly117. Residues 140–142 are interaction with tRNA; sequence KDQ. The Cysteine persulfide intermediate role is filled by Cys191. An interaction with tRNA region spans residues 296–297; it reads RY.

This sequence belongs to the MnmA/TRMU family.

Its subcellular location is the cytoplasm. It catalyses the reaction S-sulfanyl-L-cysteinyl-[protein] + uridine(34) in tRNA + AH2 + ATP = 2-thiouridine(34) in tRNA + L-cysteinyl-[protein] + A + AMP + diphosphate + H(+). Catalyzes the 2-thiolation of uridine at the wobble position (U34) of tRNA, leading to the formation of s(2)U34. The chain is tRNA-specific 2-thiouridylase MnmA from Pelobacter propionicus (strain DSM 2379 / NBRC 103807 / OttBd1).